The sequence spans 1001 residues: 26S proteasome non-ATPase regulatory subunit 1 homolog B (1001 aa).

At Ala2 the chain carries N-acetylalanine. Residue Lys166 forms a Glycyl lysine isopeptide (Lys-Gly) (interchain with G-Cter in ubiquitin) linkage. PC repeat units lie at residues 412–447, 452–485, 487–521, 522–555, 557–590, 591–626, 627–659, 661–695, 696–736, and 739–771; these read SATA…GGSP, GALY…EVIQ, GACL…VAGE, AAGI…EKII, GLAL…IIRY, GGMY…DVRR, TAVL…PHVR, GAAL…FVRQ, GALI…DTMS, and GAIL…TAVI. Disordered stretches follow at residues 853 to 896 and 954 to 1001; these read AKKE…TVEK and SLTD…YASP. Residues 854–863 show a composition bias toward basic and acidic residues; sequence KKEAEQKAKA. Position 889 is a phosphoserine (Ser889). Positions 961–985 are enriched in low complexity; sequence STASPAVGAEAAGQAQQAATTSAMA.

The protein belongs to the proteasome subunit S1 family. Component of the 19S regulatory particle (RP/PA700) base subcomplex of the 26S proteasome. The 26S proteasome is composed of a core protease (CP), known as the 20S proteasome, capped at one or both ends by the 19S regulatory particle (RP/PA700). The RP/PA700 complex is composed of at least 17 different subunits in two subcomplexes, the base and the lid, which form the portions proximal and distal to the 20S proteolytic core, respectively.

In terms of biological role, acts as a regulatory subunit of the 26 proteasome which is involved in the ATP-dependent degradation of ubiquitinated proteins. This is 26S proteasome non-ATPase regulatory subunit 1 homolog B (RPN2B) from Arabidopsis thaliana (Mouse-ear cress).